Consider the following 429-residue polypeptide: Formate-dependent phosphoribosylglycinamide formyltransferase (429 aa).

Residues 26-27 (EL) and Glu-86 contribute to the N(1)-(5-phospho-beta-D-ribosyl)glycinamide site. ATP-binding positions include Arg-118, Lys-159, 199–202 (EEHI), and Glu-207. The 197-residue stretch at 123-319 (ETLAREAKVP…EFGLHLRAVL (197 aa)) folds into the ATP-grasp domain. 2 residues coordinate Mg(2+): Glu-276 and Glu-288. Residues Asp-295, Lys-375, and 382 to 383 (RR) contribute to the N(1)-(5-phospho-beta-D-ribosyl)glycinamide site.

Belongs to the PurK/PurT family. Homodimer.

It carries out the reaction N(1)-(5-phospho-beta-D-ribosyl)glycinamide + formate + ATP = N(2)-formyl-N(1)-(5-phospho-beta-D-ribosyl)glycinamide + ADP + phosphate + H(+). The protein operates within purine metabolism; IMP biosynthesis via de novo pathway; N(2)-formyl-N(1)-(5-phospho-D-ribosyl)glycinamide from N(1)-(5-phospho-D-ribosyl)glycinamide (formate route): step 1/1. In terms of biological role, involved in the de novo purine biosynthesis. Catalyzes the transfer of formate to 5-phospho-ribosyl-glycinamide (GAR), producing 5-phospho-ribosyl-N-formylglycinamide (FGAR). Formate is provided by PurU via hydrolysis of 10-formyl-tetrahydrofolate. The protein is Formate-dependent phosphoribosylglycinamide formyltransferase of Thermococcus kodakarensis (strain ATCC BAA-918 / JCM 12380 / KOD1) (Pyrococcus kodakaraensis (strain KOD1)).